The chain runs to 144 residues: MLVPKRVKYRREFRGNMRGRAKGGTEVAFGEYGLQAVEASWITNRQIEAARIAMTRYMKRGGKVWIKIFPHKSYTSKPIGVRMGKGKGAPEGWVSPVKRGKIMFEIAGVPEDVAREALRLAAHKLPVKTKIVKREEIGGEANES.

This sequence belongs to the universal ribosomal protein uL16 family. As to quaternary structure, part of the 50S ribosomal subunit.

Its function is as follows. Binds 23S rRNA and is also seen to make contacts with the A and possibly P site tRNAs. The chain is Large ribosomal subunit protein uL16 from Listeria innocua serovar 6a (strain ATCC BAA-680 / CLIP 11262).